The chain runs to 103 residues: Salivary thrombin inhibitor anophelin (103 aa).

Positions 1 to 21 (MASKLFVLAFLCLALVVVVQS) are cleaved as a signal peptide. The disordered stretch occupies residues 24–103 (QYARGDVPTY…PAASSSESDE (80 aa)). Positions 56–68 (EEFDPSLLEEHAD) are blocks exosite I of host thrombin. The tract at residues 74 to 77 (DPGR) is blocks active site cleft of host thrombin in a reverse direction compared to substrates. Residues 91-103 (ASAPAASSSESDE) show a composition bias toward low complexity.

The protein belongs to the anophelin family. As to quaternary structure, interacts with human F2 (thrombin); the interaction results in thrombin inhibition. In terms of tissue distribution, female salivary gland (at protein level). Not detected in female midgut, head, carcass and male tissues (at protein level).

It is found in the secreted. Increasing concentration of NaCl decreases affinity for thrombin. Salivary protein with anticoagulant activity that inhibits host thrombin (F2); binds to the proteinase in a reverse orientation (opposite to substrates). In Anopheles gambiae (African malaria mosquito), this protein is Salivary thrombin inhibitor anophelin.